The sequence spans 205 residues: Bcl2-associated agonist of cell death (205 aa).

The interval M1–P139 is disordered. S67 is modified (phosphoserine). Residues I85–H98 are compositionally biased toward polar residues. Position 113 is a phosphoserine (S113). Residues T118–L128 show a composition bias toward acidic residues. Position 129 is a phosphoserine (S129). Residues R132 and R134 each carry the asymmetric dimethylarginine; by PRMT1 modification. A Phosphoserine modification is found at S135. At S137 the chain carries Phosphoserine; by PKA, PKB, PAK1, RPS6KA1, RPS6KB1 and PKC/PRKCQ. Positions Y148–S162 match the BH3 motif. Phosphoserine is present on residues S156 and S171. The disordered stretch occupies residues G161–Q180.

It belongs to the Bcl-2 family. Forms heterodimers with the anti-apoptotic proteins, Bcl-X(L), Bcl-2 and Bcl-W. Also binds protein S100A10. The Ser-113/Ser-137 phosphorylated form binds 14-3-3 proteins. Interacts with AKT1 and PIM3. Interacts with HIF3A (via C-terminus domain); the interaction reduces the binding between BAD and BAX. Interacts (via BH3 domain) with NOL3 (via CARD domain); preventing the association of BAD with BCL2. Interacts with GIMAP3/IAN4 and GIMAP5/IAN5. Post-translationally, phosphorylated at one or more of Ser-113, Ser-137, Ser-156 and Ser-171 in response to survival stimuli, which blocks its pro-apoptotic activity. Phosphorylation on Ser-137 or Ser-113 promotes heterodimerization with 14-3-3 proteins. This interaction then facilitates the phosphorylation at Ser-156, a site within the BH3 motif, leading to the release of Bcl-X(L) and the promotion of cell survival. Ser-137 is the major site of AKT/PKB phosphorylation, Ser-156 the major site of protein kinase A (CAPK) phosphorylation. Methylation at Arg-132 and Arg-134 by PRMT1 inhibits Akt-mediated phosphorylation at Ser-137. As to expression, expressed in all tissues tested, including brain, liver, spleen and heart. In the brain, restricted to epithelial cells of the choroid plexus. Isoform alpha is the more abundant form.

It is found in the mitochondrion outer membrane. Its subcellular location is the cytoplasm. Promotes cell death. Successfully competes for the binding to Bcl-X(L), Bcl-2 and Bcl-W, thereby affecting the level of heterodimerization of these proteins with BAX. Can reverse the death repressor activity of Bcl-X(L), but not that of Bcl-2. Appears to act as a link between growth factor receptor signaling and the apoptotic pathways. This chain is Bcl2-associated agonist of cell death (Bad), found in Rattus norvegicus (Rat).